A 311-amino-acid chain; its full sequence is Formimidoylglutamase (311 aa).

Residues histidine 130, aspartate 155, histidine 157, aspartate 159, cysteine 242, and aspartate 244 each coordinate Mn(2+).

It belongs to the arginase family. Mn(2+) is required as a cofactor.

The enzyme catalyses N-formimidoyl-L-glutamate + H2O = formamide + L-glutamate. Its pathway is amino-acid degradation; L-histidine degradation into L-glutamate; L-glutamate from N-formimidoyl-L-glutamate (hydrolase route): step 1/1. In terms of biological role, catalyzes the conversion of N-formimidoyl-L-glutamate to L-glutamate and formamide. The polypeptide is Formimidoylglutamase (Staphylococcus aureus (strain MRSA252)).